The primary structure comprises 560 residues: Terminal uridylyltransferase Tailor (560 aa).

Residues 169–197 (EQHPKPNPNNQPVQPHPTHQTKQEKKQAQ) are disordered. The span at 176–188 (PNNQPVQPHPTHQ) shows a compositional bias: low complexity. The Mg(2+) site is built by aspartate 278 and aspartate 280. The region spanning 455–522 (LRNFFAYFAK…VVQDPIQLNH (68 aa)) is the PAP-associated domain.

Mg(2+) serves as cofactor.

The protein localises to the cytoplasm. It catalyses the reaction RNA(n) + UTP = RNA(n)-3'-uridine ribonucleotide + diphosphate. In terms of biological role, uridylyltransferase which mediates terminal uridylation of miRNAs, leading to their degradation. Has high specificity for splicing-derived miRNAs (mirtrons) and other miRNA substrates containing a 3'-G terminal nucleotide. Appears to be a major suppressor of mirtron biogenesis. This Drosophila melanogaster (Fruit fly) protein is Terminal uridylyltransferase Tailor.